The chain runs to 237 residues: 1-(5-phosphoribosyl)-5-[(5-phosphoribosylamino)methylideneamino] imidazole-4-carboxamide isomerase (237 aa).

The Proton acceptor role is filled by Asp8. Asp129 serves as the catalytic Proton donor.

This sequence belongs to the HisA/HisF family.

It localises to the cytoplasm. The catalysed reaction is 1-(5-phospho-beta-D-ribosyl)-5-[(5-phospho-beta-D-ribosylamino)methylideneamino]imidazole-4-carboxamide = 5-[(5-phospho-1-deoxy-D-ribulos-1-ylimino)methylamino]-1-(5-phospho-beta-D-ribosyl)imidazole-4-carboxamide. It participates in amino-acid biosynthesis; L-histidine biosynthesis; L-histidine from 5-phospho-alpha-D-ribose 1-diphosphate: step 4/9. The protein is 1-(5-phosphoribosyl)-5-[(5-phosphoribosylamino)methylideneamino] imidazole-4-carboxamide isomerase of Dehalococcoides mccartyi (strain ATCC BAA-2266 / KCTC 15142 / 195) (Dehalococcoides ethenogenes (strain 195)).